The chain runs to 120 residues: Ribonuclease P protein component 2 (120 aa).

Belongs to the eukaryotic/archaeal RNase P protein component 2 family. As to quaternary structure, consists of a catalytic RNA component and at least 4-5 protein subunits. Forms a subcomplex with Rnp3 which stimulates the catalytic RNA.

The protein resides in the cytoplasm. The enzyme catalyses Endonucleolytic cleavage of RNA, removing 5'-extranucleotides from tRNA precursor.. In terms of biological role, part of ribonuclease P, a protein complex that generates mature tRNA molecules by cleaving their 5'-ends. The RNA is catalytic, but its KM for pre-tRNA is 170-fold decreased in the presence of the 4 known protein subunits (Rnp1-4). The protein subunits also decrease the amount of Mg(2+) needed for activity. The polypeptide is Ribonuclease P protein component 2 (Pyrococcus furiosus (strain ATCC 43587 / DSM 3638 / JCM 8422 / Vc1)).